We begin with the raw amino-acid sequence, 442 residues long: Histidinol dehydrogenase (442 aa).

The NAD(+) site is built by Tyr132, Gln194, and Asn217. Residues Ser243, Gln265, and His268 each contribute to the substrate site. 2 residues coordinate Zn(2+): Gln265 and His268. Catalysis depends on proton acceptor residues Glu332 and His333. The substrate site is built by His333, Asp366, Glu420, and His425. Zn(2+) is bound at residue Asp366. His425 provides a ligand contact to Zn(2+).

It belongs to the histidinol dehydrogenase family. The cofactor is Zn(2+).

The enzyme catalyses L-histidinol + 2 NAD(+) + H2O = L-histidine + 2 NADH + 3 H(+). Its pathway is amino-acid biosynthesis; L-histidine biosynthesis; L-histidine from 5-phospho-alpha-D-ribose 1-diphosphate: step 9/9. Its function is as follows. Catalyzes the sequential NAD-dependent oxidations of L-histidinol to L-histidinaldehyde and then to L-histidine. This chain is Histidinol dehydrogenase, found in Idiomarina loihiensis (strain ATCC BAA-735 / DSM 15497 / L2-TR).